The following is a 309-amino-acid chain: Ornithine carbamoyltransferase (309 aa).

Residues 57-60, Gln84, Arg108, and 135-138 contribute to the carbamoyl phosphate site; these read STRT and HPCQ. L-ornithine contacts are provided by residues Asn166, Asp224, and 228-229; that span reads SM. Residues 264–265 and Arg292 each bind carbamoyl phosphate; that span reads CL.

Belongs to the aspartate/ornithine carbamoyltransferase superfamily. OTCase family.

It is found in the cytoplasm. It carries out the reaction carbamoyl phosphate + L-ornithine = L-citrulline + phosphate + H(+). It participates in amino-acid biosynthesis; L-arginine biosynthesis; L-arginine from L-ornithine and carbamoyl phosphate: step 1/3. In terms of biological role, reversibly catalyzes the transfer of the carbamoyl group from carbamoyl phosphate (CP) to the N(epsilon) atom of ornithine (ORN) to produce L-citrulline. The polypeptide is Ornithine carbamoyltransferase (Paracidovorax citrulli (strain AAC00-1) (Acidovorax citrulli)).